An 88-amino-acid chain; its full sequence is DNA-directed RNA polymerase subunit omega (88 aa).

Belongs to the RNA polymerase subunit omega family. In terms of assembly, the RNAP catalytic core consists of 2 alpha, 1 beta, 1 beta' and 1 omega subunit. When a sigma factor is associated with the core the holoenzyme is formed, which can initiate transcription.

The enzyme catalyses RNA(n) + a ribonucleoside 5'-triphosphate = RNA(n+1) + diphosphate. Functionally, promotes RNA polymerase assembly. Latches the N- and C-terminal regions of the beta' subunit thereby facilitating its interaction with the beta and alpha subunits. This Pseudomonas aeruginosa (strain LESB58) protein is DNA-directed RNA polymerase subunit omega.